The chain runs to 329 residues: Segregation and condensation protein B (329 aa).

3 disordered regions span residues 1–39, 252–274, and 286–329; these read MTTG…GPAD, IVEK…SDPA, and SEAA…PKPE.

The protein belongs to the ScpB family. In terms of assembly, homodimer. Homodimerization may be required to stabilize the binding of ScpA to the Smc head domains. Component of the Structural Maintenance of Chromosome (SMC) condensin-like complex composed of ScpA, ScpB and the Smc homodimer. ScpA and ScpB bind to the head domain of Smc, the presence of the three proteins is required for the association of the complex with DNA.

The protein localises to the cytoplasm. In terms of biological role, a conditionally essential component of the chromosome segregation machinery. Required for chromosome condensation and partitioning. Important for positioning and anchoring of ParB-parS complexes (ori of replication) in the subpolar region, and of the ter replication site, as well as for segration of the ParB-parS complex and thus chromosome segregation. Probably acts via the formation of a condensin-like complex containing Smc, ScpA and ScpB that pulls DNA away from mid-cell into both cell halves. The chain is Segregation and condensation protein B from Myxococcus xanthus (strain DK1622).